Consider the following 490-residue polypeptide: ABC transporter ATP-binding protein ModF (490 aa).

2 consecutive ABC transporter domains span residues 4-235 (LQIL…AHSE) and 261-489 (IVLN…LTKI). ATP-binding positions include 36 to 43 (GSNGSGKS) and 293 to 300 (GPNGAGKS).

Belongs to the ABC transporter superfamily.

It is found in the cell inner membrane. Probably not involved in the transport of molybdenum into the cell. This chain is ABC transporter ATP-binding protein ModF (modF), found in Escherichia coli (strain K12).